Here is a 484-residue protein sequence, read N- to C-terminus: Glutamyl-tRNA(Gln) amidotransferase subunit A (484 aa).

Catalysis depends on charge relay system residues K74 and S149. Catalysis depends on S173, which acts as the Acyl-ester intermediate.

Belongs to the amidase family. GatA subfamily. As to quaternary structure, heterotrimer of A, B and C subunits.

It carries out the reaction L-glutamyl-tRNA(Gln) + L-glutamine + ATP + H2O = L-glutaminyl-tRNA(Gln) + L-glutamate + ADP + phosphate + H(+). Allows the formation of correctly charged Gln-tRNA(Gln) through the transamidation of misacylated Glu-tRNA(Gln) in organisms which lack glutaminyl-tRNA synthetase. The reaction takes place in the presence of glutamine and ATP through an activated gamma-phospho-Glu-tRNA(Gln). The polypeptide is Glutamyl-tRNA(Gln) amidotransferase subunit A (Prochlorococcus marinus subsp. pastoris (strain CCMP1986 / NIES-2087 / MED4)).